A 168-amino-acid chain; its full sequence is Photosystem I assembly protein Ycf3 (168 aa).

TPR repeat units follow at residues 35–68, 72–105, and 120–153; these read AFTY…EIDP, SYIL…NPFL, and GEQA…TPGN.

The protein belongs to the Ycf3 family.

The protein localises to the plastid. The protein resides in the chloroplast thylakoid membrane. In terms of biological role, essential for the assembly of the photosystem I (PSI) complex. May act as a chaperone-like factor to guide the assembly of the PSI subunits. This chain is Photosystem I assembly protein Ycf3, found in Gossypium barbadense (Sea Island cotton).